Reading from the N-terminus, the 421-residue chain is Caspase-12 (421 aa).

The CARD domain maps to 1–92; that stretch reads MADKKPSKED…QLSLEYQHES (92 aa). Ser-85 bears the Phosphoserine mark. A disordered region spans residues 88 to 131; the sequence is YQHESEDQESEESSASSSSSTESEEENEESKDEERAASAHSMAV. The segment covering 109-118 has biased composition (acidic residues); that stretch reads ESEEENEESK. Catalysis depends on residues His-252 and Cys-300.

The protein belongs to the peptidase C14A family. In terms of assembly, heterotetramer that consists of two anti-parallel arranged heterodimers, each one formed by two subunits (Potential). May interact with TRAF2.

Involved in the activation cascade of caspases responsible for apoptosis execution. The chain is Caspase-12 from Macaca mulatta (Rhesus macaque).